We begin with the raw amino-acid sequence, 2359 residues long: Pre-mRNA-processing-splicing factor 8A (2359 aa).

Positions 1–54 (MWNNNDGMPLAPPGTGGSMMPPPPAAHPSYTALPPPSNPTPPVEPTPEEAEAKL) are disordered. Over residues 33-45 (LPPPSNPTPPVEP) the composition is skewed to pro residues. Positions 2127 to 2258 (TYIMPKNILK…LTSYKLTQTG (132 aa)) constitute an MPN domain.

Interacts with CLO.

It is found in the nucleus. Its function is as follows. Functions as a scaffold that mediates the ordered assembly of spliceosomal proteins and snRNAs. Required for the assembly of the U4/U6-U5 tri-snRNP complex. Required for embryo development. Required for splicing efficiency of COOLAIR introns and usage of the proximal poly(A) site. COOLAIR is a set of long non-coding antisense transcripts produced at the FLOWERING LOCUS C (FLC). COOLAIR initiates just downstream of the major sense transcript poly(A) site and terminates either early or extends into the FLC promoter region. Splicing of COOLAIR by PRP8A is functionally important for FLC regulation. The protein is Pre-mRNA-processing-splicing factor 8A of Arabidopsis thaliana (Mouse-ear cress).